The chain runs to 320 residues: Cytochrome c biogenesis protein CcsA (320 aa).

A run of 8 helical transmembrane segments spans residues 15 to 35 (FSIVSIVITIHLITLLVDEII), 43 to 63 (KGMIAIFLCITGLLVTRWIYS), 71 to 91 (LYESLIFLSWSLSVIHIVPYF), 98 to 118 (LSTITASSVIFTQGFATSGLL), 143 to 163 (MILSYAALLCGSLLSVALLVI), 224 to 244 (VISLGFIFLTIGILSGAVWAN), 251 to 271 (WNWDPKETWAFITWIVFAIYL), and 285 to 305 (AIVASIGFLIIWICYFGVNLL).

Belongs to the CcmF/CycK/Ccl1/NrfE/CcsA family. In terms of assembly, may interact with Ccs1.

The protein localises to the plastid. Its subcellular location is the chloroplast thylakoid membrane. Functionally, required during biogenesis of c-type cytochromes (cytochrome c6 and cytochrome f) at the step of heme attachment. The protein is Cytochrome c biogenesis protein CcsA of Panax ginseng (Korean ginseng).